We begin with the raw amino-acid sequence, 372 residues long: MTLTVTVSLLSSPLHSVCTSAGARFTGFAGWELPLQFQGLMQEHLAVRERAGLFDISHMGKFQLRGSGLRAALQRLLPSDLTTLLPGQAQYSVLLNEAGGCLDDLIVYWQGIVDGVEQAFLIVNAATTDSDRLWLTEHLPPAIALLDLSQDLALVAIQGPQAIAFLQPLVSCDLAELPRFSHTVTSIAGQPAFVARTGYTGEDGCEVMLPPAAAITLWQQLTAAGVVPCGLGARDTLRLEAAMPLYGHELDTDTNPLEAGLGWVVHLDRNPDFLGRDRLVQAKTNGLERRLVGLELPGRNIARHGYPVAIADTTVGIVTSGSWSPTLSKAIALAYVPPALANLGQELWVEIRGKQVPATVVKRPFYRGSQFR.

This sequence belongs to the GcvT family. As to quaternary structure, the glycine cleavage system is composed of four proteins: P, T, L and H.

It carries out the reaction N(6)-[(R)-S(8)-aminomethyldihydrolipoyl]-L-lysyl-[protein] + (6S)-5,6,7,8-tetrahydrofolate = N(6)-[(R)-dihydrolipoyl]-L-lysyl-[protein] + (6R)-5,10-methylene-5,6,7,8-tetrahydrofolate + NH4(+). Its function is as follows. The glycine cleavage system catalyzes the degradation of glycine. In Synechococcus elongatus (strain ATCC 33912 / PCC 7942 / FACHB-805) (Anacystis nidulans R2), this protein is Aminomethyltransferase.